Consider the following 218-residue polypeptide: Large ribosomal subunit protein uL1 (218 aa).

This sequence belongs to the universal ribosomal protein uL1 family. Part of the 50S ribosomal subunit.

In terms of biological role, binds directly to 23S rRNA. Probably involved in E site tRNA release. Protein L1 is also a translational repressor protein, it controls the translation of its operon by binding to its mRNA. The polypeptide is Large ribosomal subunit protein uL1 (Metallosphaera sedula (strain ATCC 51363 / DSM 5348 / JCM 9185 / NBRC 15509 / TH2)).